The sequence spans 351 residues: 3-hydroxy-4-methyl-anthranilyl-[aryl-carrier protein] 5-monooxygenase (351 aa).

Belongs to the aromatic-ring hydroxylase family. Requires FAD as cofactor.

It catalyses the reaction 3-hydroxy-4-methylanthranilyl-[aryl-carrier protein] + NADH + O2 + H(+) = 3,5-dihydroxy-4-methylanthranilyl-[aryl-carrier protein] + NAD(+) + H2O. It participates in antibiotic biosynthesis. Functionally, involved in the biosynthesis of the antitumor antibiotic sibiromycin. Hydroxylates the C5 position of the peptidyl carrier protein (PCP)-bound 4-methyl-3-hydroxyanthranilic acid (4-MHA or 3H4MAA), leading to the formation of the fully substituted anthranilate moiety found in sibiromycin. This Streptosporangium sibiricum protein is 3-hydroxy-4-methyl-anthranilyl-[aryl-carrier protein] 5-monooxygenase.